The sequence spans 274 residues: Non-homologous end joining protein Ku (274 aa).

The Ku domain maps to 11-195; that stretch reads ITFGLVNVPV…KYKITPKELS (185 aa).

Belongs to the prokaryotic Ku family. In terms of assembly, homodimer. Interacts with LigD.

Functionally, with LigD forms a non-homologous end joining (NHEJ) DNA repair enzyme, which repairs dsDNA breaks with reduced fidelity. Binds linear dsDNA with 5'- and 3'- overhangs but not closed circular dsDNA nor ssDNA. Recruits and stimulates the ligase activity of LigD. This chain is Non-homologous end joining protein Ku, found in Coxiella burnetii (strain RSA 331 / Henzerling II).